The primary structure comprises 394 residues: Chorismate synthase (394 aa).

The NADP(+) site is built by R42 and R48. Residues 137–139 (RAS), 258–259 (QA), G302, 317–321 (KPIAT), and R343 contribute to the FMN site.

It belongs to the chorismate synthase family. In terms of assembly, homotetramer. The cofactor is FMNH2.

The enzyme catalyses 5-O-(1-carboxyvinyl)-3-phosphoshikimate = chorismate + phosphate. It functions in the pathway metabolic intermediate biosynthesis; chorismate biosynthesis; chorismate from D-erythrose 4-phosphate and phosphoenolpyruvate: step 7/7. Catalyzes the anti-1,4-elimination of the C-3 phosphate and the C-6 proR hydrogen from 5-enolpyruvylshikimate-3-phosphate (EPSP) to yield chorismate, which is the branch point compound that serves as the starting substrate for the three terminal pathways of aromatic amino acid biosynthesis. This reaction introduces a second double bond into the aromatic ring system. The chain is Chorismate synthase from Streptomyces coelicolor (strain ATCC BAA-471 / A3(2) / M145).